The primary structure comprises 411 residues: Tyrosine--tRNA ligase (411 aa).

L-tyrosine is bound at residue Tyr34. The 'HIGH' region motif lies at 39–48 (CTATSLHIGS). The L-tyrosine site is built by Tyr171 and Gln175. A 'KMSKS' region motif is present at residues 231–235 (KMGKT). Lys234 is a binding site for ATP. The 67-residue stretch at 345 to 411 (ISAYKLFYNV…GKKRHILVKV (67 aa)) folds into the S4 RNA-binding domain.

This sequence belongs to the class-I aminoacyl-tRNA synthetase family. TyrS type 1 subfamily. In terms of assembly, homodimer.

It localises to the cytoplasm. The catalysed reaction is tRNA(Tyr) + L-tyrosine + ATP = L-tyrosyl-tRNA(Tyr) + AMP + diphosphate + H(+). Its function is as follows. Catalyzes the attachment of tyrosine to tRNA(Tyr) in a two-step reaction: tyrosine is first activated by ATP to form Tyr-AMP and then transferred to the acceptor end of tRNA(Tyr). The sequence is that of Tyrosine--tRNA ligase from Rickettsia typhi (strain ATCC VR-144 / Wilmington).